The sequence spans 120 residues: Large ribosomal subunit protein uL18 (120 aa).

It belongs to the universal ribosomal protein uL18 family. Part of the 50S ribosomal subunit; part of the 5S rRNA/L5/L18/L25 subcomplex. Contacts the 5S and 23S rRNAs.

Its function is as follows. This is one of the proteins that bind and probably mediate the attachment of the 5S RNA into the large ribosomal subunit, where it forms part of the central protuberance. The chain is Large ribosomal subunit protein uL18 from Hyphomonas neptunium (strain ATCC 15444).